We begin with the raw amino-acid sequence, 763 residues long: Phosphoglycerol transferase I (763 aa).

Transmembrane regions (helical) follow at residues 4–19, 26–48, 76–98, and 105–127; these read LLSF…IYAW, WWFA…LFAS, YILP…GWIL, and PHHF…ASPA.

Belongs to the OpgB family.

The protein resides in the cell inner membrane. It catalyses the reaction a phosphatidylglycerol + a membrane-derived-oligosaccharide D-glucose = a 1,2-diacyl-sn-glycerol + a membrane-derived-oligosaccharide 6-(glycerophospho)-D-glucose.. It functions in the pathway glycan metabolism; osmoregulated periplasmic glucan (OPG) biosynthesis. Functionally, transfers a phosphoglycerol residue from phosphatidylglycerol to the membrane-bound nascent glucan backbones. The sequence is that of Phosphoglycerol transferase I from Escherichia coli O6:H1 (strain CFT073 / ATCC 700928 / UPEC).